Here is a 280-residue protein sequence, read N- to C-terminus: 1-cyclohexenylcarbonyl-CoA reductase (280 aa).

Residues 22 to 25, 71 to 72, and Asn-98 contribute to the NADP(+) site; these read SRGI and DV. Residues Tyr-158 and Lys-165 each act as proton acceptor in the active site. Residues Lys-165 and 194 to 196 contribute to the NADP(+) site; that span reads IDS.

This sequence belongs to the short-chain dehydrogenases/reductases (SDR) family. Homodimer.

It catalyses the reaction (4R,5R)-4,5-dihydroxycyclohex-2-ene-1-carbonyl-CoA + NADP(+) = (3R,4R)-3,4-dihydroxycyclohexa-1,5-diene-1-carbonyl-CoA + NADPH + H(+). The catalysed reaction is (3S)-3-hydroxycyclohexane-1-carbonyl-CoA + NADP(+) = (5S)-5-hydroxycyclohex-1-ene-1-carbonyl-CoA + NADPH + H(+). It carries out the reaction cyclohexane-1-carbonyl-CoA + NADP(+) = cyclohex-1-ene-1-carbonyl-CoA + NADPH + H(+). It functions in the pathway antibiotic biosynthesis. Inhibited by the thiol inhibitors p-chloromercuribenzoate, N-ethylmaleimide and iodoacetamide. Also inhibited by various divalent cations. Involved in the biosynthesis of the antifungal antibiotic ansatrienin A (mycotrienin I). Catalyzes three of the reductive steps involved in the formation of the cyclohexanecarboxylic acid (CHC) moiety of ansatrienin from shikimic acid. Can use 3,4-dihydroxycyclohexa-1,5-diene-1-carbonyl-CoA, 5-hydroxycyclohex-1-ene-1-carbonyl-CoA and cyclohex-1-ene-1-carbonyl-CoA as substrates. The polypeptide is 1-cyclohexenylcarbonyl-CoA reductase (Streptomyces collinus).